We begin with the raw amino-acid sequence, 70 residues long: Large ribosomal subunit protein uL29 (70 aa).

This sequence belongs to the universal ribosomal protein uL29 family.

This chain is Large ribosomal subunit protein uL29, found in Clostridium botulinum (strain ATCC 19397 / Type A).